Consider the following 1365-residue polypeptide: DNA-directed RNA polymerase subunit beta'' (1365 aa).

4 residues coordinate Zn(2+): Cys224, Cys295, Cys302, and Cys305.

It belongs to the RNA polymerase beta' chain family. RpoC2 subfamily. In plastids the minimal PEP RNA polymerase catalytic core is composed of four subunits: alpha, beta, beta', and beta''. When a (nuclear-encoded) sigma factor is associated with the core the holoenzyme is formed, which can initiate transcription. It depends on Zn(2+) as a cofactor.

Its subcellular location is the plastid. The protein resides in the chloroplast. The catalysed reaction is RNA(n) + a ribonucleoside 5'-triphosphate = RNA(n+1) + diphosphate. Functionally, DNA-dependent RNA polymerase catalyzes the transcription of DNA into RNA using the four ribonucleoside triphosphates as substrates. This Fagopyrum esculentum subsp. ancestrale (Wild buckwheat) protein is DNA-directed RNA polymerase subunit beta''.